The primary structure comprises 472 residues: Sodium-coupled neutral amino acid transporter 5 (472 aa).

The residue at position 1 (methionine 1) is an N-acetylmethionine. The Cytoplasmic portion of the chain corresponds to 1–48; sequence MELQDPKMNGALPSDAVGYRQEREGFLPSRGPAPGSKPVQFMDFEGKT. A helical transmembrane segment spans residues 49 to 71; it reads SFGMSVFNLSNAIMGSGILGLAY. Over 72–87 the chain is Extracellular; it reads AMAHTGVIFFLALLLC. Residues 88-108 form a helical membrane-spanning segment; that stretch reads IALLSSYSIHLLLTCAGIAGI. Topologically, residues 109 to 125 are cytoplasmic; the sequence is RAYEQLGQRAFGPAGKV. Residues 126 to 146 traverse the membrane as a helical segment; sequence VVATVICLHNVGAMSSYLFII. At 147 to 166 the chain is on the extracellular side; it reads KSELPLVIGTFLYMDPEGDW. The chain crosses the membrane as a helical span at residues 167–187; sequence FLKGNLLIIIVSVLIILPLAL. Residues 188 to 192 are Cytoplasmic-facing; it reads MKHLG. A helical transmembrane segment spans residues 193-213; that stretch reads YLGYTSGLSLTCMLFFLVSVI. The Extracellular portion of the chain corresponds to 214 to 257; that stretch reads YKKFQLGCAIGHNETAMESEALVGLPSQGLNSSCEAQMFTVDSQ. Cysteine 221 and cysteine 247 are disulfide-bonded. An N-linked (GlcNAc...) asparagine glycan is attached at asparagine 226. A helical membrane pass occupies residues 258–278; sequence MSYTVPIMAFAFVCHPEVLPI. Topologically, residues 279–295 are cytoplasmic; the sequence is YTELCRPSKRRMQAVAN. A helical membrane pass occupies residues 296–316; that stretch reads VSIGAMFCMYGLTATFGYLTF. Residues 317-334 lie on the Extracellular side of the membrane; it reads YSSVKAEMLHMYSQKDPL. Residues 335–355 form a helical membrane-spanning segment; that stretch reads ILCVRLAVLLAVTLTVPVVLF. The Cytoplasmic portion of the chain corresponds to 356–376; it reads PIRRALQQLLFPGKAFSWPRH. Residues 377–397 traverse the membrane as a helical segment; sequence VAIALILLVLVNVLVICVPTI. The Extracellular segment spans residues 398-399; the sequence is RD. Residues 400–420 form a helical membrane-spanning segment; the sequence is IFGVIGSTSAPSLIFILPSIF. Over 421-439 the chain is Cytoplasmic; that stretch reads YLRIVPSEVEPFLSWPKIQ. The chain crosses the membrane as a helical span at residues 440 to 460; it reads ALCFGVLGVLFMAVSLGFMFA. At 461–472 the chain is on the extracellular side; the sequence is NWATGQSRMSGH.

It belongs to the amino acid/polyamine transporter 2 family. As to expression, predominantly expressed in stomach, brain, liver, lung and intestinal tract.

Its subcellular location is the cell membrane. The enzyme catalyses L-serine(out) + Na(+)(out) + H(+)(in) = L-serine(in) + Na(+)(in) + H(+)(out). It carries out the reaction L-alanine(out) + Na(+)(out) + H(+)(in) = L-alanine(in) + Na(+)(in) + H(+)(out). It catalyses the reaction glycine(out) + Na(+)(out) + H(+)(in) = glycine(in) + Na(+)(in) + H(+)(out). The catalysed reaction is L-glutamine(out) + Na(+)(out) + H(+)(in) = L-glutamine(in) + Na(+)(in) + H(+)(out). The enzyme catalyses L-asparagine(out) + Na(+)(out) + H(+)(in) = L-asparagine(in) + Na(+)(in) + H(+)(out). It carries out the reaction L-histidine(out) + Na(+)(out) + H(+)(in) = L-histidine(in) + Na(+)(in) + H(+)(out). It catalyses the reaction L-cysteine(out) + Na(+)(out) + H(+)(in) = L-cysteine(in) + Na(+)(in) + H(+)(out). With respect to regulation, not inhibited by lithium. Partial allosteric regulation on ions sodium binding. Functionally, symporter that cotransports neutral amino acids and sodium ions, coupled to an H(+) antiporter activity. Releases L-glutamine and glycine from astroglial cells and may participate in the glutamate/GABA-L-glutamine cycle and the NMDA receptors activation. In addition, contributes significantly to L-glutamine uptake in retina, namely in ganglion and Mueller cells therefore, participates in the retinal glutamate-glutamine cycle. The transport activity is pH sensitive and Li(+) tolerant. Moreover functions in both direction and is associated with large uncoupled fluxes of protons. The transport is electroneutral coupled to the cotransport of 1 Na(+) and the antiport of 1 H(+). May have a particular importance for modulation of net hepatic glutamine flux. The protein is Sodium-coupled neutral amino acid transporter 5 (SLC38A5) of Homo sapiens (Human).